Consider the following 949-residue polypeptide: Inactive atromentin synthetase invA3 (949 aa).

Residues 38-460 (RAVSQYPNHE…SGRIKDTVVV (423 aa)) form an adenylation (A) domain region. A Carrier domain is found at 592-670 (ALSTETEKTL…NLAKYVDSLV (79 aa)). The tract at residues 597 to 667 (TEKTLAGIYA…VISNLAKYVD (71 aa)) is thiolation and peptide carrier (T) domain. The residue at position 629 (S629) is an O-(pantetheine 4'-phosphoryl)serine. The interval 693–934 (PIFMVHPGMA…YTLMDFDHVA (242 aa)) is thioesterase (TE) domain.

Belongs to the ATP-dependent AMP-binding enzyme family.

Inactive atromentin synthetase homolog. While the invA3 adenylation (A) domain is capable of adenylating 4-hydroxyphenylpyruvate (4-HPP), the invA3 enzyme is inactive because of its non-functional thioesterase (TE) domain. The protein is Inactive atromentin synthetase invA3 (invA3) of Paxillus involutus (Naked brimcap).